We begin with the raw amino-acid sequence, 285 residues long: BAG family molecular chaperone regulator 2 (285 aa).

A Ubiquitin-like domain is found at 37–113 (RGIRVRVKYG…LILIEDPISQ (77 aa)). Residues 132-210 (AISDISFQVE…KYVEALDLLK (79 aa)) form the BAG domain. Serine 244 carries the phosphoserine modification.

As to quaternary structure, binds to the ATPase domain of HSP70/HSC70 chaperones.

Functionally, co-chaperone that regulates diverse cellular pathways, such as programmed cell death and stress responses. This is BAG family molecular chaperone regulator 2 (BAG2) from Arabidopsis thaliana (Mouse-ear cress).